The primary structure comprises 146 residues: 3-hydroxyacyl-[acyl-carrier-protein] dehydratase FabZ (146 aa).

Residue His49 is part of the active site.

It belongs to the thioester dehydratase family. FabZ subfamily.

Its subcellular location is the cytoplasm. The enzyme catalyses a (3R)-hydroxyacyl-[ACP] = a (2E)-enoyl-[ACP] + H2O. Involved in unsaturated fatty acids biosynthesis. Catalyzes the dehydration of short chain beta-hydroxyacyl-ACPs and long chain saturated and unsaturated beta-hydroxyacyl-ACPs. The protein is 3-hydroxyacyl-[acyl-carrier-protein] dehydratase FabZ of Pseudomonas syringae pv. tomato (strain ATCC BAA-871 / DC3000).